The sequence spans 126 residues: MLSEFKTFIMRGNVLDLAVGVIIGGAFTGIVKSLTNNLISPIITFFTGGTSDLQNLKLVVTKELTFKYGAFLNDVINFLITAFVVFLLVKFVNRILRTNKKEEVKANPELEVLAEIRDLLEAQKKA.

2 helical membrane passes run 14–34 (VLDL…VKSL) and 69–89 (GAFL…FLLV).

Belongs to the MscL family. As to quaternary structure, homopentamer.

It is found in the cell membrane. Its function is as follows. Channel that opens in response to stretch forces in the membrane lipid bilayer. May participate in the regulation of osmotic pressure changes within the cell. This Leuconostoc citreum (strain KM20) protein is Large-conductance mechanosensitive channel.